A 474-amino-acid chain; its full sequence is Phenylalanine--tRNA ligase alpha subunit (474 aa).

Residues T317, 356-358, and Y396 each bind L-phenylalanine; that span reads QLE. E398 contributes to the Mg(2+) binding site. F421 lines the L-phenylalanine pocket.

The protein belongs to the class-II aminoacyl-tRNA synthetase family. Phe-tRNA synthetase alpha subunit type 2 subfamily. As to quaternary structure, tetramer of two alpha and two beta subunits. Mg(2+) is required as a cofactor.

It localises to the cytoplasm. The catalysed reaction is tRNA(Phe) + L-phenylalanine + ATP = L-phenylalanyl-tRNA(Phe) + AMP + diphosphate + H(+). This chain is Phenylalanine--tRNA ligase alpha subunit, found in Archaeoglobus fulgidus (strain ATCC 49558 / DSM 4304 / JCM 9628 / NBRC 100126 / VC-16).